A 250-amino-acid chain; its full sequence is Large ribosomal subunit protein uL30 (250 aa).

It belongs to the universal ribosomal protein uL30 family.

The polypeptide is Large ribosomal subunit protein uL30 (RPL7) (Yarrowia lipolytica (strain CLIB 122 / E 150) (Yeast)).